The sequence spans 56 residues: Large ribosomal subunit protein bL32 (56 aa).

The tract at residues 1 to 26 (MAVQQNKKSRSKRGMRRSHDALSTAQ) is disordered. The segment covering 7–16 (KKSRSKRGMR) has biased composition (basic residues).

It belongs to the bacterial ribosomal protein bL32 family.

The polypeptide is Large ribosomal subunit protein bL32 (Shewanella amazonensis (strain ATCC BAA-1098 / SB2B)).